We begin with the raw amino-acid sequence, 470 residues long: Probable citrate synthase, mitochondrial (470 aa).

Catalysis depends on residues His297, His351, and Asp406.

The protein belongs to the citrate synthase family. As to quaternary structure, homodimer.

The protein resides in the mitochondrion matrix. It carries out the reaction oxaloacetate + acetyl-CoA + H2O = citrate + CoA + H(+). Its pathway is carbohydrate metabolism; tricarboxylic acid cycle; isocitrate from oxaloacetate: step 1/2. The sequence is that of Probable citrate synthase, mitochondrial from Leishmania braziliensis.